The primary structure comprises 141 residues: Lysozyme 1 (141 aa).

Residues 1–19 form the signal peptide; it reads MKFFIVLVAALALAAPAMG. The 122-residue stretch at 20–141 folds into the C-type lysozyme domain; sequence KTFTRCSLAR…GSLPSINDCF (122 aa). Disulfide bonds link C25–C140, C46–C130, C81–C97, and C93–C111. E51 is a catalytic residue. The N-linked (GlcNAc...) asparagine glycan is linked to N65. D69 is an active-site residue. N-linked (GlcNAc...) asparagine glycosylation is present at N104.

The protein belongs to the glycosyl hydrolase 22 family.

It catalyses the reaction Hydrolysis of (1-&gt;4)-beta-linkages between N-acetylmuramic acid and N-acetyl-D-glucosamine residues in a peptidoglycan and between N-acetyl-D-glucosamine residues in chitodextrins.. May not function as a self-defense protein, but as a digestive enzyme, probably in the gut of the insect body. Inactive towards Micrococcus luteus. Active toward glycol chitin. The protein is Lysozyme 1 of Musca domestica (House fly).